A 154-amino-acid polypeptide reads, in one-letter code: Large ribosomal subunit protein uL13 (154 aa).

This sequence belongs to the universal ribosomal protein uL13 family. As to quaternary structure, part of the 50S ribosomal subunit.

Its function is as follows. This protein is one of the early assembly proteins of the 50S ribosomal subunit, although it is not seen to bind rRNA by itself. It is important during the early stages of 50S assembly. This chain is Large ribosomal subunit protein uL13, found in Brucella suis (strain ATCC 23445 / NCTC 10510).